The following is a 354-amino-acid chain: Methionine aminotransferase BCAT4 (354 aa).

Residue Lys198 is modified to N6-(pyridoxal phosphate)lysine.

Belongs to the class-IV pyridoxal-phosphate-dependent aminotransferase family. It depends on pyridoxal 5'-phosphate as a cofactor. Mostly expressed in phloem.

The protein localises to the cytoplasm. It catalyses the reaction a 2-oxocarboxylate + L-methionine = 4-methylsulfanyl-2-oxobutanoate + an L-alpha-amino acid. Functionally, converts 2-oxo acids to branched-chain amino acids. Shows activity with L-Leu, L-Ile and L-Val as amino donors and alpha-keto-glutarate as an amino acceptor, but no activity for D-isomers of Leu, Ile, Val, Asp, Glu or Ala. Acts on methionine and its derivatives and the corresponding 2-oxo acids. Catalyzes the initial deamination of methionine to 4-methylthio-2-oxobutyrate as well as the transamination of other typical intermediates of the methionine chain elongation pathway. This Arabidopsis thaliana (Mouse-ear cress) protein is Methionine aminotransferase BCAT4 (BCAT4).